Reading from the N-terminus, the 177-residue chain is Nuclear export protein (177 aa).

Short sequence motifs (nuclear export signal) lie at residues 91–100 (LWLPMKSLSL) and 117–127 (MKHQILTRLKL).

Binds M1 protein. May interact with human nucleoporins and exportin XPO1/CRM1.

Its subcellular location is the virion. It is found in the host nucleus. In terms of biological role, mediates the nuclear export of encapsidated genomic RNAs (ribonucleoproteins, RNPs). Acts as an adapter between viral RNPs complexes and the nuclear export machinery of the cell. Possesses no intrinsic RNA-binding activity, but includes a C-terminal M1-binding domain. This domain is believed to allow recognition of RNPs to which the M1 protein is bound. Because the M1 protein is not available in large quantities until the later stages of infection, such an indirect recognition mechanism probably ensures that genomic RNPs are not exported from the nucleus before sufficient quantities of viral mRNA and progeny genomic RNA have been synthesized. Furthermore, the RNPs enters the cytoplasm only when they have associated with the M1 protein that is necessary to guide them to the plasma membrane. May down-regulate viral RNA synthesis when overproduced. The sequence is that of Nuclear export protein (NS) from Homo sapiens (Human).